Reading from the N-terminus, the 649-residue chain is Threonine--tRNA ligase (649 aa).

The region spanning 1–66 is the TGS domain; sequence MVQITLPDGS…DNDAQLAIVT (66 aa). Residues 247–538 form a catalytic region; sequence DHRKIGRELD…LIENHAGAMP (292 aa). Positions 338, 389, and 515 each coordinate Zn(2+).

The protein belongs to the class-II aminoacyl-tRNA synthetase family. As to quaternary structure, homodimer. It depends on Zn(2+) as a cofactor.

It is found in the cytoplasm. The catalysed reaction is tRNA(Thr) + L-threonine + ATP = L-threonyl-tRNA(Thr) + AMP + diphosphate + H(+). Its function is as follows. Catalyzes the attachment of threonine to tRNA(Thr) in a two-step reaction: L-threonine is first activated by ATP to form Thr-AMP and then transferred to the acceptor end of tRNA(Thr). Also edits incorrectly charged L-seryl-tRNA(Thr). The chain is Threonine--tRNA ligase from Bordetella bronchiseptica (strain ATCC BAA-588 / NCTC 13252 / RB50) (Alcaligenes bronchisepticus).